Reading from the N-terminus, the 701-residue chain is Elongation factor G (701 aa).

Residues 8–286 form the tr-type G domain; that stretch reads DRVRNIGIIA…AVVLLLPSPL (279 aa). Residues 17-24, 85-89, and 139-142 contribute to the GTP site; these read AHIDAGKT, DTPGH, and NKMD.

The protein belongs to the TRAFAC class translation factor GTPase superfamily. Classic translation factor GTPase family. EF-G/EF-2 subfamily.

The protein localises to the cytoplasm. In terms of biological role, catalyzes the GTP-dependent ribosomal translocation step during translation elongation. During this step, the ribosome changes from the pre-translocational (PRE) to the post-translocational (POST) state as the newly formed A-site-bound peptidyl-tRNA and P-site-bound deacylated tRNA move to the P and E sites, respectively. Catalyzes the coordinated movement of the two tRNA molecules, the mRNA and conformational changes in the ribosome. This Herpetosiphon aurantiacus (strain ATCC 23779 / DSM 785 / 114-95) protein is Elongation factor G.